Reading from the N-terminus, the 314-residue chain is 2,3-dihydroxyphenylpropionate/2,3-dihydroxicinnamic acid 1,2-dioxygenase 1 (314 aa).

Catalysis depends on histidine 115, which acts as the Proton donor. Histidine 179 functions as the Proton acceptor in the catalytic mechanism.

This sequence belongs to the LigB/MhpB extradiol dioxygenase family. Homotetramer. Fe(2+) is required as a cofactor.

The catalysed reaction is 3-(2,3-dihydroxyphenyl)propanoate + O2 = (2Z,4E)-2-hydroxy-6-oxonona-2,4-dienedioate + H(+). The enzyme catalyses (2E)-3-(2,3-dihydroxyphenyl)prop-2-enoate + O2 = (2Z,4E,7E)-2-hydroxy-6-oxonona-2,4,7-trienedioate + H(+). Its pathway is aromatic compound metabolism; 3-phenylpropanoate degradation. Catalyzes the non-heme iron(II)-dependent oxidative cleavage of 2,3-dihydroxyphenylpropionic acid and 2,3-dihydroxicinnamic acid into 2-hydroxy-6-ketononadienedioate and 2-hydroxy-6-ketononatrienedioate, respectively. This chain is 2,3-dihydroxyphenylpropionate/2,3-dihydroxicinnamic acid 1,2-dioxygenase 1, found in Pseudomonas putida (Arthrobacter siderocapsulatus).